Here is a 1075-residue protein sequence, read N- to C-terminus: Carbamoyl phosphate synthase large chain (1075 aa).

Residues 1 to 403 are carboxyphosphate synthetic domain; it reads MPKRTDINTI…SLQKALRGLE (403 aa). ATP is bound by residues R129, R169, G175, G176, Q208, V210, E215, G241, V242, H243, Q285, and E299. In terms of domain architecture, ATP-grasp 1 spans 133–328; that stretch reads KDAMTKIGLN…IAKVAAKLAV (196 aa). Q285, E299, and N301 together coordinate Mg(2+). Residues Q285, E299, and N301 each contribute to the Mn(2+) site. Positions 404–548 are oligomerization domain; the sequence is IGICGFNLRS…YSTYEDECEA (145 aa). A carbamoyl phosphate synthetic domain region spans residues 549–930; it reads KPTTRQKVMI…AYYKAQLGAG (382 aa). Residues 673–864 form the ATP-grasp 2 domain; the sequence is QKILTDLGLK…LAKIAALVMA (192 aa). Positions 709, 748, 750, 755, 780, 781, 782, 783, 823, and 835 each coordinate ATP. Mg(2+) is bound by residues Q823, E835, and N837. Mn(2+) is bound by residues Q823, E835, and N837. The MGS-like domain maps to 931-1070; that stretch reads ERIPSTGKVF…QQLHLSSALA (140 aa). Residues 931-1075 are allosteric domain; the sequence is ERIPSTGKVF…SSALANQITR (145 aa).

This sequence belongs to the CarB family. As to quaternary structure, composed of two chains; the small (or glutamine) chain promotes the hydrolysis of glutamine to ammonia, which is used by the large (or ammonia) chain to synthesize carbamoyl phosphate. Tetramer of heterodimers (alpha,beta)4. It depends on Mg(2+) as a cofactor. Mn(2+) is required as a cofactor.

The enzyme catalyses hydrogencarbonate + L-glutamine + 2 ATP + H2O = carbamoyl phosphate + L-glutamate + 2 ADP + phosphate + 2 H(+). It catalyses the reaction hydrogencarbonate + NH4(+) + 2 ATP = carbamoyl phosphate + 2 ADP + phosphate + 2 H(+). Its pathway is amino-acid biosynthesis; L-arginine biosynthesis; carbamoyl phosphate from bicarbonate: step 1/1. It participates in pyrimidine metabolism; UMP biosynthesis via de novo pathway; (S)-dihydroorotate from bicarbonate: step 1/3. Large subunit of the glutamine-dependent carbamoyl phosphate synthetase (CPSase). CPSase catalyzes the formation of carbamoyl phosphate from the ammonia moiety of glutamine, carbonate, and phosphate donated by ATP, constituting the first step of 2 biosynthetic pathways, one leading to arginine and/or urea and the other to pyrimidine nucleotides. The large subunit (synthetase) binds the substrates ammonia (free or transferred from glutamine from the small subunit), hydrogencarbonate and ATP and carries out an ATP-coupled ligase reaction, activating hydrogencarbonate by forming carboxy phosphate which reacts with ammonia to form carbamoyl phosphate. This Haemophilus ducreyi (strain 35000HP / ATCC 700724) protein is Carbamoyl phosphate synthase large chain.